A 143-amino-acid chain; its full sequence is Small ribosomal subunit protein uS12 (143 aa).

The span at 1-20 (MGKCRGLRTARKLRSHRRDQ) shows a compositional bias: basic residues. The interval 1 to 26 (MGKCRGLRTARKLRSHRRDQKWHDKQ) is disordered. Lys-37 is covalently cross-linked (Glycyl lysine isopeptide (Lys-Gly) (interchain with G-Cter in SUMO2)). At Lys-54 the chain carries N6-succinyllysine. A 3-hydroxyproline modification is found at Pro-62. Lys-135 is subject to N6-acetyllysine.

This sequence belongs to the universal ribosomal protein uS12 family. As to quaternary structure, component of the 40S small ribosomal subunit. Part of the small subunit (SSU) processome, composed of more than 70 proteins and the RNA chaperone small nucleolar RNA (snoRNA) U3. In terms of processing, hydroxylation at Pro-62 affects translation termination efficiency.

Its subcellular location is the cytoplasm. It is found in the cytosol. The protein resides in the rough endoplasmic reticulum. It localises to the nucleus. The protein localises to the nucleolus. Component of the ribosome, a large ribonucleoprotein complex responsible for the synthesis of proteins in the cell. The small ribosomal subunit (SSU) binds messenger RNAs (mRNAs) and translates the encoded message by selecting cognate aminoacyl-transfer RNA (tRNA) molecules. The large subunit (LSU) contains the ribosomal catalytic site termed the peptidyl transferase center (PTC), which catalyzes the formation of peptide bonds, thereby polymerizing the amino acids delivered by tRNAs into a polypeptide chain. The nascent polypeptides leave the ribosome through a tunnel in the LSU and interact with protein factors that function in enzymatic processing, targeting, and the membrane insertion of nascent chains at the exit of the ribosomal tunnel. Plays an important role in translational accuracy. Part of the small subunit (SSU) processome, first precursor of the small eukaryotic ribosomal subunit. During the assembly of the SSU processome in the nucleolus, many ribosome biogenesis factors, an RNA chaperone and ribosomal proteins associate with the nascent pre-rRNA and work in concert to generate RNA folding, modifications, rearrangements and cleavage as well as targeted degradation of pre-ribosomal RNA by the RNA exosome. This chain is Small ribosomal subunit protein uS12 (RPS23), found in Bos taurus (Bovine).